The following is a 225-amino-acid chain: Sodium-dependent neutral amino acid transporter SLC6A17 (225 aa).

Helical transmembrane passes span 1-8 (NVWRFPYL), 16-35 (AYLV…LFFL), and 60-80 (GIGF…NVII). The Extracellular segment spans residues 81–143 (GWSIFYFFKS…NSISESGGLN (63 aa)). Residue asparagine 105 is glycosylated (N-linked (GlcNAc...) asparagine). A run of 3 helical transmembrane segments spans residues 144–162 (WKMT…MAVV), 171–188 (VMYF…CFLV), and 224–225 (IF).

It belongs to the sodium:neurotransmitter symporter (SNF) (TC 2.A.22) family.

It is found in the cytoplasmic vesicle. The protein resides in the secretory vesicle. It localises to the synaptic vesicle membrane. Its subcellular location is the postsynapse. The protein localises to the presynapse. It carries out the reaction L-proline(in) + Na(+)(in) = L-proline(out) + Na(+)(out). The catalysed reaction is L-leucine(in) + Na(+)(in) = L-leucine(out) + Na(+)(out). It catalyses the reaction glycine(in) + Na(+)(in) = glycine(out) + Na(+)(out). The enzyme catalyses L-alanine(in) + Na(+)(in) = L-alanine(out) + Na(+)(out). It carries out the reaction L-glutamine(in) + Na(+)(in) = L-glutamine(out) + Na(+)(out). Its function is as follows. Synaptic vesicle transporter with apparent selectivity for neutral amino acids. The transport is sodium-coupled but chloride-independent, likely driven by the proton electrochemical gradient generated by vacuolar H(+)-ATPase in an overall electrogenic mechanism. May contribute to the synaptic uptake of neurotransmitter precursors in a process coupled in part to vesicle exocytosis. The polypeptide is Sodium-dependent neutral amino acid transporter SLC6A17 (Bos taurus (Bovine)).